Here is a 359-residue protein sequence, read N- to C-terminus: 5-amino-6-(D-ribitylamino)uracil--L-tyrosine 4-hydroxyphenyl transferase (359 aa).

A Radical SAM core domain is found at 45 to 282 (VTYVVNANIN…VYAISRIFFK (238 aa)). [4Fe-4S] cluster is bound by residues Cys59, Cys63, and Cys66.

Belongs to the radical SAM superfamily. CofH family. Consists of two subunits, CofG and CofH. Requires [4Fe-4S] cluster as cofactor.

The enzyme catalyses 5-amino-6-(D-ribitylamino)uracil + L-tyrosine + S-adenosyl-L-methionine = 5-amino-5-(4-hydroxybenzyl)-6-(D-ribitylimino)-5,6-dihydrouracil + 2-iminoacetate + 5'-deoxyadenosine + L-methionine + H(+). It functions in the pathway cofactor biosynthesis; coenzyme F0 biosynthesis. Functionally, catalyzes the radical-mediated synthesis of 5-amino-5-(4-hydroxybenzyl)-6-(D-ribitylimino)-5,6-dihydrouracil from 5-amino-6-(D-ribitylamino)uracil and L-tyrosine. This chain is 5-amino-6-(D-ribitylamino)uracil--L-tyrosine 4-hydroxyphenyl transferase, found in Methanococcus maripaludis (strain C7 / ATCC BAA-1331).